The primary structure comprises 185 residues: Elongation factor P (185 aa).

It belongs to the elongation factor P family.

The protein localises to the cytoplasm. It functions in the pathway protein biosynthesis; polypeptide chain elongation. Functionally, involved in peptide bond synthesis. Stimulates efficient translation and peptide-bond synthesis on native or reconstituted 70S ribosomes in vitro. Probably functions indirectly by altering the affinity of the ribosome for aminoacyl-tRNA, thus increasing their reactivity as acceptors for peptidyl transferase. The protein is Elongation factor P of Desulfitobacterium hafniense (strain Y51).